The following is an 873-amino-acid chain: Bifunctional uridylyltransferase/uridylyl-removing enzyme (873 aa).

A uridylyltransferase region spans residues 1–332 (MPYQCPITFN…NGGQTQEAEI (332 aa)). Residues 333 to 692 (LDNDFQRRGS…ISKKATRGGT (360 aa)) are uridylyl-removing. Residues 451 to 573 (VDEHSIRLLK…VRDEESLELL (123 aa)) form the HD domain. 2 ACT domains span residues 693 to 777 (EVFV…RTPR) and 800 to 873 (LMEL…ELAP).

Belongs to the GlnD family. Mg(2+) serves as cofactor.

It catalyses the reaction [protein-PII]-L-tyrosine + UTP = [protein-PII]-uridylyl-L-tyrosine + diphosphate. The catalysed reaction is [protein-PII]-uridylyl-L-tyrosine + H2O = [protein-PII]-L-tyrosine + UMP + H(+). Its activity is regulated as follows. Uridylyltransferase (UTase) activity is inhibited by glutamine, while glutamine activates uridylyl-removing (UR) activity. Functionally, modifies, by uridylylation and deuridylylation, the PII regulatory proteins (GlnB and homologs), in response to the nitrogen status of the cell that GlnD senses through the glutamine level. Under low glutamine levels, catalyzes the conversion of the PII proteins and UTP to PII-UMP and PPi, while under higher glutamine levels, GlnD hydrolyzes PII-UMP to PII and UMP (deuridylylation). Thus, controls uridylylation state and activity of the PII proteins, and plays an important role in the regulation of nitrogen assimilation and metabolism. The sequence is that of Bifunctional uridylyltransferase/uridylyl-removing enzyme from Vibrio atlanticus (strain LGP32) (Vibrio splendidus (strain Mel32)).